Here is a 337-residue protein sequence, read N- to C-terminus: LIX1-like protein (337 aa).

A disordered region spans residues 1-55 (METMRAQRLQPGVGVGGRGTLRALRPGVTGAPTSAATPPVGPPPAPPPPAPPLPP). Over residues 26–38 (PGVTGAPTSAATP) the composition is skewed to low complexity. The segment covering 39–55 (PVGPPPAPPPPAPPLPP) has biased composition (pro residues).

It belongs to the LIX1 family.

The polypeptide is LIX1-like protein (Lix1l) (Mus musculus (Mouse)).